The primary structure comprises 1173 residues: Fas-binding factor 1 (1173 aa).

Positions 17-168 (MALRTKKGLK…PSSSKTGLQY (152 aa)) are disordered. Basic and acidic residues predominate over residues 46–56 (KPAEPASHAKD). Positions 80 to 93 (AGADAEASSVSDAD) are enriched in low complexity. Position 172 is a phosphoserine (serine 172). Disordered stretches follow at residues 180–225 (LAGL…GDTP) and 241–566 (TTLG…SSRE). Residues 206–216 (SPGAAAGQGPS) are compositionally biased toward low complexity. Composition is skewed to basic and acidic residues over residues 247–258 (DSPKAERKKTGD) and 287–299 (TGERREFQLDKKY). Composition is skewed to polar residues over residues 331–345 (VASSEGRQSRRQSVS), 396–411 (SPVQKAQQEDSPMTPS), 468–477 (VISQKKSQNL), and 533–544 (TGSSMSWSQATT). Coiled-coil stretches lie at residues 617 to 742 (TAQL…QQAS), 808 to 917 (QQRE…MNKC), and 975 to 1057 (CELR…VQRQ). Lysine 1002 is covalently cross-linked (Glycyl lysine isopeptide (Lys-Gly) (interchain with G-Cter in SUMO2)). The segment at 1091 to 1124 (ASLPGLPPRVQGPAASSRDAVQAPASSSPQCSQP) is disordered. Low complexity predominate over residues 1110-1124 (AVQAPASSSPQCSQP).

Interacts with PARD3. May interact with FAS cytoplasmic domain. Interacts with TRAPPC14. In terms of tissue distribution, broadly expressed.

Its subcellular location is the cytoplasm. It is found in the cytoskeleton. The protein localises to the microtubule organizing center. The protein resides in the centrosome. It localises to the centriole. Its subcellular location is the spindle pole. It is found in the cell junction. In terms of biological role, keratin-binding protein required for epithelial cell polarization. Involved in apical junction complex (AJC) assembly via its interaction with PARD3. Required for ciliogenesis. This is Fas-binding factor 1 (Fbf1) from Mus musculus (Mouse).